We begin with the raw amino-acid sequence, 186 residues long: Elongation factor P (186 aa).

This sequence belongs to the elongation factor P family.

The protein resides in the cytoplasm. Its pathway is protein biosynthesis; polypeptide chain elongation. Its function is as follows. Involved in peptide bond synthesis. Stimulates efficient translation and peptide-bond synthesis on native or reconstituted 70S ribosomes in vitro. Probably functions indirectly by altering the affinity of the ribosome for aminoacyl-tRNA, thus increasing their reactivity as acceptors for peptidyl transferase. The chain is Elongation factor P from Prochlorococcus marinus (strain SARG / CCMP1375 / SS120).